Reading from the N-terminus, the 429-residue chain is Ribosomal RNA small subunit methyltransferase B (429 aa).

Residues 254–260 (CAAPGGK), aspartate 277, aspartate 303, and aspartate 322 each bind S-adenosyl-L-methionine. Cysteine 375 (nucleophile) is an active-site residue.

This sequence belongs to the class I-like SAM-binding methyltransferase superfamily. RsmB/NOP family.

Its subcellular location is the cytoplasm. It carries out the reaction cytidine(967) in 16S rRNA + S-adenosyl-L-methionine = 5-methylcytidine(967) in 16S rRNA + S-adenosyl-L-homocysteine + H(+). Specifically methylates the cytosine at position 967 (m5C967) of 16S rRNA. The protein is Ribosomal RNA small subunit methyltransferase B of Escherichia coli O6:H1 (strain CFT073 / ATCC 700928 / UPEC).